Reading from the N-terminus, the 308-residue chain is Carbonic anhydrase 6 (308 aa).

Residues 1–17 (MRALVLLLSLFLLGGQA) form the signal peptide. The Alpha-carbonic anhydrase domain occupies 21–278 (SDWTYSEGAL…LNHRVVESNF (258 aa)). Cysteine 42 and cysteine 224 are oxidised to a cystine. N-linked (GlcNAc...) asparagine glycosylation occurs at asparagine 67. Residue histidine 85 is the Proton donor/acceptor of the active site. Zn(2+) is bound by residues histidine 111, histidine 113, and histidine 138. 220-221 (TT) contributes to the substrate binding site. A glycan (N-linked (GlcNAc...) asparagine) is linked at asparagine 256.

This sequence belongs to the alpha-carbonic anhydrase family. The cofactor is Zn(2+). Major constituent of saliva.

The protein localises to the secreted. The catalysed reaction is hydrogencarbonate + H(+) = CO2 + H2O. With respect to regulation, inhibited by coumarins, sulfonamide derivatives such as acetazolamide (AZA), saccharin and Foscarnet (phosphonoformate trisodium salt). Its function is as follows. Reversible hydration of carbon dioxide. Its role in saliva is unknown. The protein is Carbonic anhydrase 6 (CA6) of Homo sapiens (Human).